The following is a 57-amino-acid chain: Large ribosomal subunit protein bL33 (57 aa).

This sequence belongs to the bacterial ribosomal protein bL33 family.

The polypeptide is Large ribosomal subunit protein bL33 (Shewanella halifaxensis (strain HAW-EB4)).